The sequence spans 63 residues: U-reduvitoxin-Pr4a (63 aa).

An N-terminal signal peptide occupies residues 1–19 (MKIFGLFLLIATYMALAFA). Intrachain disulfides connect Cys24–Cys40, Cys31–Cys45, and Cys39–Cys52.

The protein belongs to the venom Ptu1-like knottin family. In terms of tissue distribution, expressed by the venom gland.

It is found in the secreted. In terms of biological role, binds reversibly and blocks P/Q-type voltage-gated calcium channels (Cav). This chain is U-reduvitoxin-Pr4a, found in Platymeris rhadamanthus (Red spot assassin bug).